The sequence spans 162 residues: Phosphopantetheine adenylyltransferase (162 aa).

Substrate is bound at residue S9. ATP contacts are provided by residues 9 to 10 (SF) and H17. Substrate contacts are provided by K41, L73, and K87. Residues 88–90 (GLR), E98, and 123–129 (YAHLSSS) contribute to the ATP site.

This sequence belongs to the bacterial CoaD family. Homohexamer. It depends on Mg(2+) as a cofactor.

It is found in the cytoplasm. The catalysed reaction is (R)-4'-phosphopantetheine + ATP + H(+) = 3'-dephospho-CoA + diphosphate. Its pathway is cofactor biosynthesis; coenzyme A biosynthesis; CoA from (R)-pantothenate: step 4/5. Its function is as follows. Reversibly transfers an adenylyl group from ATP to 4'-phosphopantetheine, yielding dephospho-CoA (dPCoA) and pyrophosphate. The chain is Phosphopantetheine adenylyltransferase from Symbiobacterium thermophilum (strain DSM 24528 / JCM 14929 / IAM 14863 / T).